The primary structure comprises 446 residues: Tripartite motif-containing protein 43B (446 aa).

The segment at 15 to 56 (CVICLNYLVDPVTICCGHSFCRPCLCLSWEEAQSPANCPACR) adopts an RING-type zinc-finger fold. A B box-type zinc finger spans residues 88-129 (SEKQICGTHRQTKKMFCDMDKSLLCLLCSNSQEHGAHKHYPI). Zn(2+)-binding residues include Cys93, His96, Cys115, and His121. Coiled coils occupy residues 129-158 (IEEA…QRNL) and 190-220 (LHKE…VKMD). The B30.2/SPRY domain maps to 269–446 (ELTAGPITGL…VRPFFYTGHR (178 aa)).

This sequence belongs to the TRIM/RBCC family.

The polypeptide is Tripartite motif-containing protein 43B (TRIM43B) (Homo sapiens (Human)).